The primary structure comprises 1007 residues: Integrator complex subunit 8 (1007 aa).

Positions 19–24 (WFEFLL) match the WFEF motif motif. The span at 56 to 78 (TAQESVGTPGSDLQNLNQTPSNS) shows a compositional bias: polar residues. Residues 56–112 (TAQESVGTPGSDLQNLNQTPSNSGPIPGVVGGAPAPTTPTASGGVGMPHSPQRPAEK) form a disordered region. Positions 79–97 (GPIPGVVGGAPAPTTPTAS) are enriched in low complexity.

Belongs to the Integrator subunit 8 family. Belongs to the multiprotein complex Integrator, at least composed of IntS1, IntS2, IntS3, IntS4, omd/IntS5, IntS6, defl/IntS7, IntS8, IntS9, IntS10, IntS11, IntS12, asun/IntS13, IntS14 and IntS15. The core complex associates with protein phosphatase 2A subunits mts/PP2A and Pp2A-29B, to form the Integrator-PP2A (INTAC) complex.

It localises to the nucleus. The protein localises to the chromosome. Component of the integrator complex, a multiprotein complex that terminates RNA polymerase II (Pol II) transcription in the promoter-proximal region of genes. The integrator complex provides a quality checkpoint during transcription elongation by driving premature transcription termination of transcripts that are unfavorably configured for transcriptional elongation: the complex terminates transcription by (1) catalyzing dephosphorylation of the C-terminal domain (CTD) of Pol II subunit Polr2A/Rbp1 and Spt5, and (2) degrading the exiting nascent RNA transcript via endonuclease activity. The integrator complex is also involved in the 3'-end processing of the U7 snRNA, and also the spliceosomal snRNAs U1, U2, U4 and U5. Within the integrator complex, INTS8 is required for the recruitment of protein phosphatase 2A (PP2A) to transcription pause-release checkpoint. The protein is Integrator complex subunit 8 of Drosophila melanogaster (Fruit fly).